The following is a 1317-amino-acid chain: Kinesin-like protein KIF16B (1317 aa).

The Kinesin motor domain occupies 3–358 (SVKVAVRVRP…LRYANRAKNI (356 aa)). 102-109 (GQTGSGKS) serves as a coordination point for ATP. Residues 370-425 (VKLIRELRAEIARLKTLLAQGNQIALLDSPTALSMEEKLQQNEARVQELTKEWTNK) adopt a coiled-coil conformation. Serine 398 bears the Phosphoserine mark. Residues 478 to 529 (TYVGRDDASTEQDIVLHGLDLESEHCIFENIGGTVTLIPLSGSQCSVNGVQI) enclose the FHA domain. Threonine 577 is modified (phosphothreonine). At serine 582 the chain carries Phosphoserine. Coiled coils occupy residues 595-882 (GLEF…DESV) and 936-1087 (LSLD…VQKD). The span at 1036 to 1048 (LASLNSGSREQSG) shows a compositional bias: polar residues. The disordered stretch occupies residues 1036 to 1057 (LASLNSGSREQSGLQASLEAEQ). Serine 1052 is modified (phosphoserine). Residues 1182–1296 (DPIKISIPRY…KVGLTLSKHT (115 aa)) form the PX domain.

This sequence belongs to the TRAFAC class myosin-kinesin ATPase superfamily. Kinesin family. In terms of assembly, interacts with RAB14. Interacts with PTPN21. In terms of tissue distribution, primarily expressed in brain. Also present in kidney, liver, intestine, placenta, leukocytes, heart and skeletal muscle (at protein level).

The protein resides in the cytoplasm. Its subcellular location is the cytoskeleton. It is found in the early endosome membrane. It localises to the spindle. In terms of biological role, plus end-directed microtubule-dependent motor protein involved in endosome transport and receptor recycling and degradation. Regulates the plus end motility of early endosomes and the balance between recycling and degradation of receptors such as EGF receptor (EGFR) and FGF receptor (FGFR). Regulates the Golgi to endosome transport of FGFR-containing vesicles during early development, a key process for developing basement membrane and epiblast and primitive endoderm lineages during early postimplantation development. The polypeptide is Kinesin-like protein KIF16B (KIF16B) (Homo sapiens (Human)).